We begin with the raw amino-acid sequence, 145 residues long: ATP synthase epsilon chain (145 aa).

This sequence belongs to the ATPase epsilon chain family. As to quaternary structure, F-type ATPases have 2 components, CF(1) - the catalytic core - and CF(0) - the membrane proton channel. CF(1) has five subunits: alpha(3), beta(3), gamma(1), delta(1), epsilon(1). CF(0) has three main subunits: a, b and c.

Its subcellular location is the cell membrane. Its function is as follows. Produces ATP from ADP in the presence of a proton gradient across the membrane. The chain is ATP synthase epsilon chain from Buchnera aphidicola subsp. Baizongia pistaciae (strain Bp).